The sequence spans 492 residues: Acetyl-coenzyme A carboxylase carboxyl transferase subunit beta, chloroplastic (492 aa).

Positions Ser198–Ser219 are disordered. The 265-residue stretch at Leu228–Asn492 folds into the CoA carboxyltransferase N-terminal domain. Zn(2+)-binding residues include Cys232, Cys235, Cys251, and Cys254. The C4-type zinc finger occupies Cys232–Cys254.

It belongs to the AccD/PCCB family. Acetyl-CoA carboxylase is a heterohexamer composed of biotin carboxyl carrier protein, biotin carboxylase and 2 subunits each of ACCase subunit alpha and ACCase plastid-coded subunit beta (accD). Zn(2+) is required as a cofactor.

The protein resides in the plastid. Its subcellular location is the chloroplast stroma. It catalyses the reaction N(6)-carboxybiotinyl-L-lysyl-[protein] + acetyl-CoA = N(6)-biotinyl-L-lysyl-[protein] + malonyl-CoA. It functions in the pathway lipid metabolism; malonyl-CoA biosynthesis; malonyl-CoA from acetyl-CoA: step 1/1. Component of the acetyl coenzyme A carboxylase (ACC) complex. Biotin carboxylase (BC) catalyzes the carboxylation of biotin on its carrier protein (BCCP) and then the CO(2) group is transferred by the transcarboxylase to acetyl-CoA to form malonyl-CoA. The polypeptide is Acetyl-coenzyme A carboxylase carboxyl transferase subunit beta, chloroplastic (Citrus sinensis (Sweet orange)).